An 87-amino-acid chain; its full sequence is Phosphoribosyl-ATP pyrophosphatase (87 aa).

The protein belongs to the PRA-PH family.

The protein localises to the cytoplasm. The enzyme catalyses 1-(5-phospho-beta-D-ribosyl)-ATP + H2O = 1-(5-phospho-beta-D-ribosyl)-5'-AMP + diphosphate + H(+). The protein operates within amino-acid biosynthesis; L-histidine biosynthesis; L-histidine from 5-phospho-alpha-D-ribose 1-diphosphate: step 2/9. This chain is Phosphoribosyl-ATP pyrophosphatase, found in Corynebacterium diphtheriae (strain ATCC 700971 / NCTC 13129 / Biotype gravis).